The chain runs to 364 residues: MRAILFGGGLALLVSLLGTRVAINQFTRLGYGQEIRDDGPTSHHTKRGTPTMGGVVIILATVVGYFGAKLITGDMPTASALLLLFLLVGTGLVGFVDDFIKISKQRSLGLRSKAKMIGLTVVALVFGILSLSSWLEDDRGQSPASRHISFIRDIGWITLPTVVVLLLIWLIIAATSNGVNLTDGLDGLATGASVMVFGAYMFVNIWQNNQWCGQTGLDQPNLCYEVRDPLDLAVVAAAITGACFGFLWWNASPAAIFMGDTGSLALGGALAGLAILTRTELLLIILGGLFVMETVSVMLQVATFKATKRLTGTGRRLFRIAPIHHHFEMLGWEQVTVVIRFWIITGICVAAGLGVFYAEWVAGI.

10 helical membrane passes run 3–23, 51–71, 80–100, 116–136, 154–174, 185–205, 229–249, 256–276, 281–301, and 341–361; these read AILF…RVAI, TMGG…AKLI, ALLL…DDFI, MIGL…SWLE, IGWI…IIAA, LDGL…FVNI, PLDL…FLWW, IFMG…LAIL, LLLI…MLQV, and FWII…AEWV.

Belongs to the glycosyltransferase 4 family. MraY subfamily. The cofactor is Mg(2+).

It is found in the cell membrane. It catalyses the reaction UDP-N-acetyl-alpha-D-muramoyl-L-alanyl-gamma-D-glutamyl-meso-2,6-diaminopimeloyl-D-alanyl-D-alanine + di-trans,octa-cis-undecaprenyl phosphate = di-trans,octa-cis-undecaprenyl diphospho-N-acetyl-alpha-D-muramoyl-L-alanyl-D-glutamyl-meso-2,6-diaminopimeloyl-D-alanyl-D-alanine + UMP. It participates in cell wall biogenesis; peptidoglycan biosynthesis. In terms of biological role, catalyzes the initial step of the lipid cycle reactions in the biosynthesis of the cell wall peptidoglycan: transfers peptidoglycan precursor phospho-MurNAc-pentapeptide from UDP-MurNAc-pentapeptide onto the lipid carrier undecaprenyl phosphate, yielding undecaprenyl-pyrophosphoryl-MurNAc-pentapeptide, known as lipid I. The chain is Phospho-N-acetylmuramoyl-pentapeptide-transferase from Nocardioides sp. (strain ATCC BAA-499 / JS614).